Reading from the N-terminus, the 242-residue chain is Small ribosomal subunit protein eS4 (242 aa).

The region spanning 43 to 106 is the S4 RNA-binding domain; sequence LPLMIIVRDI…GDVYRVLPDE (64 aa).

Belongs to the eukaryotic ribosomal protein eS4 family.

The sequence is that of Small ribosomal subunit protein eS4 (rps4e) from Methanothermobacter thermautotrophicus (strain ATCC 29096 / DSM 1053 / JCM 10044 / NBRC 100330 / Delta H) (Methanobacterium thermoautotrophicum).